The chain runs to 603 residues: Terpenoid synthase 25 (603 aa).

Mg(2+) is bound by residues Asp356, Asp360, Asn500, Thr504, and Glu508. The short motif at 356-360 (DDTCD) is the DDXXD motif element.

This sequence belongs to the terpene synthase family. Tpsa subfamily. Requires Mg(2+) as cofactor. Mn(2+) serves as cofactor. Predominantly expressed in roots but also in flowers.

The protein localises to the cytoplasm. Its pathway is secondary metabolite biosynthesis; terpenoid biosynthesis. In terms of biological role, involved in terpene biosynthesis in roots. Possesses sesquiterpene (C15) synthase activity in vitro. Does not seem to be involved in diterpene (C20) biosynthesis. The polypeptide is Terpenoid synthase 25 (Arabidopsis thaliana (Mouse-ear cress)).